Here is a 429-residue protein sequence, read N- to C-terminus: Histidine--tRNA ligase (429 aa).

Belongs to the class-II aminoacyl-tRNA synthetase family. As to quaternary structure, homodimer.

The protein resides in the cytoplasm. The catalysed reaction is tRNA(His) + L-histidine + ATP = L-histidyl-tRNA(His) + AMP + diphosphate + H(+). This Acidovorax ebreus (strain TPSY) (Diaphorobacter sp. (strain TPSY)) protein is Histidine--tRNA ligase.